The chain runs to 603 residues: Aspartate--tRNA(Asp/Asn) ligase (603 aa).

E187 serves as a coordination point for L-aspartate. An aspartate region spans residues Q211–K214. Positions 233 and 461 each coordinate L-aspartate. ATP is bound at residue R233–E235. Residue E495 participates in ATP binding. R502 is an L-aspartate binding site. G547–R550 contacts ATP.

It belongs to the class-II aminoacyl-tRNA synthetase family. Type 1 subfamily. Homodimer.

Its subcellular location is the cytoplasm. The enzyme catalyses tRNA(Asx) + L-aspartate + ATP = L-aspartyl-tRNA(Asx) + AMP + diphosphate. In terms of biological role, aspartyl-tRNA synthetase with relaxed tRNA specificity since it is able to aspartylate not only its cognate tRNA(Asp) but also tRNA(Asn). Reaction proceeds in two steps: L-aspartate is first activated by ATP to form Asp-AMP and then transferred to the acceptor end of tRNA(Asp/Asn). This chain is Aspartate--tRNA(Asp/Asn) ligase, found in Chlorobaculum parvum (strain DSM 263 / NCIMB 8327) (Chlorobium vibrioforme subsp. thiosulfatophilum).